A 316-amino-acid polypeptide reads, in one-letter code: Methionyl-tRNA formyltransferase (316 aa).

114 to 117 (SLLP) serves as a coordination point for (6S)-5,6,7,8-tetrahydrofolate.

Belongs to the Fmt family.

The enzyme catalyses L-methionyl-tRNA(fMet) + (6R)-10-formyltetrahydrofolate = N-formyl-L-methionyl-tRNA(fMet) + (6S)-5,6,7,8-tetrahydrofolate + H(+). Attaches a formyl group to the free amino group of methionyl-tRNA(fMet). The formyl group appears to play a dual role in the initiator identity of N-formylmethionyl-tRNA by promoting its recognition by IF2 and preventing the misappropriation of this tRNA by the elongation apparatus. The chain is Methionyl-tRNA formyltransferase from Aromatoleum aromaticum (strain DSM 19018 / LMG 30748 / EbN1) (Azoarcus sp. (strain EbN1)).